The sequence spans 221 residues: MNKGQYFWNELWCEGRISFHKEEVNPDLIAYVSSLNTPAKGRILVPLCGKSVDMLWLVRQGYHVVGIELVEKAILQFVQEHQITVRENTIGQAKQYFTDNLNLWVTDIFALNSALIEPVDAIYDRAALVALPKKLRPAYVDICLKWLKPGGSILLKTLQYNQEKVQGPPYSVSSEEIALSYQQCAKIELLKSQKRIQEPNDHLFNLGISEVNDYVWCIRKG.

S-adenosyl-L-methionine contacts are provided by W12, L47, E68, and R125.

Belongs to the class I-like SAM-binding methyltransferase superfamily. TPMT family.

The protein resides in the cytoplasm. It carries out the reaction S-adenosyl-L-methionine + a thiopurine = S-adenosyl-L-homocysteine + a thiopurine S-methylether.. The polypeptide is Thiopurine S-methyltransferase (Legionella pneumophila (strain Corby)).